Here is a 677-residue protein sequence, read N- to C-terminus: Polyunsaturated fatty acid lipoxygenase ALOX15B (677 aa).

Residues 2 to 125 enclose the PLAT domain; that stretch reads AKFRVRVSTG…ELVLREGAAK (124 aa). Residues G15, G17, D39, H40, G42, E44, D86, and A87 each contribute to the Ca(2+) site. One can recognise a Lipoxygenase domain in the interval 126–677; it reads VSWQDHHRTL…PPLIENSVSI (552 aa). Positions 374, 379, 554, and 677 each coordinate Fe cation.

The protein belongs to the lipoxygenase family. Requires Fe cation as cofactor.

Its subcellular location is the cytoplasm. The protein resides in the cytosol. It localises to the cell membrane. The protein localises to the cytoskeleton. It is found in the membrane. Its subcellular location is the cell junction. The protein resides in the adherens junction. It localises to the focal adhesion. The protein localises to the nucleus. It carries out the reaction (5Z,8Z,11Z,14Z)-eicosatetraenoate + O2 = (15S)-hydroperoxy-(5Z,8Z,11Z,13E)-eicosatetraenoate. The catalysed reaction is (9Z,12Z)-octadecadienoate + O2 = 13-hydroperoxy-(9Z,11E)-octadecadienoate. It catalyses the reaction (5S)-hydroxy-(6E,8Z,11Z,14Z)-eicosatetraenoate + O2 = (5S)-hydroxy-(15S)-hydroperoxy-(6E,8Z,11Z,13E)-eicosatetraenoate. The enzyme catalyses (5Z,8Z,11Z,14Z)-eicosatetraenoate + O2 = 5-hydroperoxy-(6E,8Z,11Z,14Z)-eicosatetraenoate. It carries out the reaction (5S,6R)-dihydroxy-(7E,9E,11Z,14Z)-eicosatetraenoate + O2 = (5S,6R)-dihydroxy-(15S)-hydroperoxy-(7E,9E,11Z,13E)-eicosatetraenoate. The catalysed reaction is (5S)-hydroperoxy-(6E,8Z,11Z,14Z)-eicosatetraenoate + O2 = (5S,15S)-dihydroperoxy-(6E,8Z,11Z,13E)-eicosatetraenoate. It catalyses the reaction 2-(5Z,8Z,11Z,14Z-eicosatetraenoyl)-glycerol + O2 = 2-[15(S)-hydroperoxy-(5Z,8Z,11Z,13E)-eicosatetraenoyl]-glycerol. The enzyme catalyses (8S)-hydroperoxy-(5Z,9E,11Z,14Z)-eicosatetraenoate + O2 = (8S,15S)-dihydroperoxy-(5Z,9E,11Z,13E)-eicosatetraenoate. It carries out the reaction N-(5Z,8Z,11Z,14Z)-eicosatetraenoyl-L-alanine + O2 = N-(15S)-hydroperoxy-(5Z,8Z,11Z,13E)-eicosatetraenoyl-alanine. The catalysed reaction is N-(5Z,8Z,11Z,14Z)-eicosatetraenoyl-gamma-aminobutanoate + O2 = N-(15S)-hydroperoxy-(5Z,8Z,11Z,13E)-eicosatetraenoyl-gamma-aminobutanoate. It catalyses the reaction N-(5Z,8Z,11Z,14Z)-eicosatetraenoyl-glycine + O2 = N-(15S)-hydroperoxy-(5Z,8Z,11Z,13E)-eicosatetraenoyl-glycine. The enzyme catalyses N-(5Z,8Z,11Z,14Z)-eicosatetraenoyl-taurine + O2 = N-(15S)-hydroperoxy-(5Z,8Z,11Z,13E)-eicosatetraenoyl-taurine. It carries out the reaction 2-(5Z,8Z,11Z,14Z-eicosatetraenoyl)-glycerol + O2 = 2-[12-hydroperoxy-(5Z,8Z,10E,14Z)-eicosatetraenoyl]-glycerol. The catalysed reaction is 1-octadecanoyl-2-(5Z,8Z,11Z,14Z-eicosatetraenoyl)-sn-glycero-3-phosphocholine + O2 = 1-octadecanoyl-2-(15-hydroperoxy-5Z,8Z,11Z,13E-eicosatetraenoyl)-sn-glycero-3-phosphocholine. It catalyses the reaction a 1-acyl-2-(5Z,8Z,11Z,14Z-eicosatetraenoyl)-sn-glycero-3-phospho-(1D-myo-inositol) + O2 = a 1-acyl-2-(15-hydroperoxy-5Z,8Z,11Z,13E-eicosatetraenoyl)-sn-glycero-3-phospho-(1D-myo-inositol). The enzyme catalyses a 1-acyl-2-(8Z,11Z,14Z-eicosatrienoyl)-sn-glycero-3-phospho-(1D-myo-inositol) + O2 = a 1-acyl-2-(15-hydroperoxy-8Z,11Z,13E-eicosatrienoyl)-sn-glycero-3-phospho-(1D-myo-inositol). It carries out the reaction 1-octadecanoyl-2-(5Z,8Z,11Z,14Z)-eicosatetraenoyl-sn-glycero-3-phosphoethanolamine + O2 = 1-octadecanoyl-2-(15-hydroperoxy-5Z,8Z,11Z,13E-eicosatetraenoyl)-sn-glycero-3-phosphoethanolamine. The catalysed reaction is 1-octadecanoyl-2-(5Z,8Z,11Z,14Z-eicosatetraenoyl)-sn-glycero-3-phospho-(1D-myo-inositol) + O2 = 1-octadecanoyl-2-(15-hydroperoxy-5Z,8Z,11Z,13E-eicosatetraenoyl)-sn-glycero-3-phospho-(1D-myo-inositol). It catalyses the reaction (8Z,11Z,14Z)-eicosatrienoate + O2 = 15-hydroperoxy-(8Z,11Z,13E)-eicosatrienoate. The enzyme catalyses (7S)-hydroperoxy-(4Z,8E,10Z,13Z,16Z,19Z)-docosahexaenoate + O2 = (7S,17S)-dihydroperoxy-(4Z,8E,10Z,13Z,15E,19Z)-docosahexaenoate. The protein operates within lipid metabolism; hydroperoxy eicosatetraenoic acid biosynthesis. In terms of biological role, non-heme iron-containing dioxygenase that catalyzes the stereo-specific peroxidation of free and esterified polyunsaturated fatty acids (PUFAs) generating a spectrum of bioactive lipid mediators. Inserts a peroxyl group at C15 of arachidonate ((5Z,8Z,11Z,14Z)-eicosatetraenoate) producing (15S)-hydroperoxyeicosatetraenoate/(15S)-HPETE. Also peroxidizes linoleate ((9Z,12Z)-octadecadienoate) to 13-hydroperoxyoctadecadienoate/13-HPODE. Oxygenates arachidonyl derivatives such as 2-arachidonoylglycerol (2-AG) leading to the production and extracellular release of 15-hydroxyeicosatetraenoyl glycerol (15-HETE-G) that acts as a peroxisome proliferator-activated receptor alpha agonist. Has the ability to efficiently class-switch ALOX5 pro-inflammatory mediators into anti-inflammatory intermediates. Participates in the sequential oxidations of DHA ((4Z,7Z,10Z,13Z,16Z,19Z)-docosahexaenoate) to generate specialized pro-resolving mediators (SPMs) resolvin D5 ((7S,17S)-diHPDHA), which can actively down-regulate the immune response and have anti-aggregation properties with platelets. In addition to free PUFAs hydrolyzed from phospholipids, it directly oxidizes PUFAs esterified to membrane-bound phospholipids. Has no detectable 8S-lipoxygenase activity on arachidonate but reacts with (8S)-HPETE to produce (8S,15S)-diHPETE. May regulate progression through the cell cycle and cell proliferation. May also regulate cytokine secretion by macrophages and therefore play a role in the immune response. May also regulate macrophage differentiation into proatherogenic foam cells. The sequence is that of Polyunsaturated fatty acid lipoxygenase ALOX15B from Rattus norvegicus (Rat).